A 133-amino-acid polypeptide reads, in one-letter code: Profilin-3 (133 aa).

This sequence belongs to the profilin family. As to quaternary structure, occurs in many kinds of cells as a complex with monomeric actin in a 1:1 ratio.

It is found in the cytoplasm. The protein resides in the cytoskeleton. In terms of biological role, binds to actin and affects the structure of the cytoskeleton. At high concentrations, profilin prevents the polymerization of actin, whereas it enhances it at low concentrations. By binding to PIP2, it inhibits the formation of IP3 and DG. The polypeptide is Profilin-3 (Ambrosia artemisiifolia (Common ragweed)).